Here is a 73-residue protein sequence, read N- to C-terminus: Protein SlyX homolog (73 aa).

Residues 54 to 73 (LQQAESNAPAAPANERPPHY) form a disordered region. Low complexity predominate over residues 57–67 (AESNAPAAPAN).

Belongs to the SlyX family.

The polypeptide is Protein SlyX homolog (Rhodopseudomonas palustris (strain BisA53)).